The primary structure comprises 255 residues: 3-deoxy-manno-octulosonate cytidylyltransferase (255 aa).

This sequence belongs to the KdsB family.

Its subcellular location is the cytoplasm. The catalysed reaction is 3-deoxy-alpha-D-manno-oct-2-ulosonate + CTP = CMP-3-deoxy-beta-D-manno-octulosonate + diphosphate. It functions in the pathway nucleotide-sugar biosynthesis; CMP-3-deoxy-D-manno-octulosonate biosynthesis; CMP-3-deoxy-D-manno-octulosonate from 3-deoxy-D-manno-octulosonate and CTP: step 1/1. It participates in bacterial outer membrane biogenesis; lipopolysaccharide biosynthesis. In terms of biological role, activates KDO (a required 8-carbon sugar) for incorporation into bacterial lipopolysaccharide in Gram-negative bacteria. In Saccharophagus degradans (strain 2-40 / ATCC 43961 / DSM 17024), this protein is 3-deoxy-manno-octulosonate cytidylyltransferase.